The chain runs to 578 residues: Proline--tRNA ligase (578 aa).

Belongs to the class-II aminoacyl-tRNA synthetase family. ProS type 1 subfamily. Homodimer.

The protein localises to the cytoplasm. It carries out the reaction tRNA(Pro) + L-proline + ATP = L-prolyl-tRNA(Pro) + AMP + diphosphate. Catalyzes the attachment of proline to tRNA(Pro) in a two-step reaction: proline is first activated by ATP to form Pro-AMP and then transferred to the acceptor end of tRNA(Pro). As ProRS can inadvertently accommodate and process non-cognate amino acids such as alanine and cysteine, to avoid such errors it has two additional distinct editing activities against alanine. One activity is designated as 'pretransfer' editing and involves the tRNA(Pro)-independent hydrolysis of activated Ala-AMP. The other activity is designated 'posttransfer' editing and involves deacylation of mischarged Ala-tRNA(Pro). The misacylated Cys-tRNA(Pro) is not edited by ProRS. In Burkholderia thailandensis (strain ATCC 700388 / DSM 13276 / CCUG 48851 / CIP 106301 / E264), this protein is Proline--tRNA ligase.